The following is a 108-amino-acid chain: Nucleoid-associated protein BTH_I2220 (108 aa).

Belongs to the YbaB/EbfC family. As to quaternary structure, homodimer.

The protein resides in the cytoplasm. The protein localises to the nucleoid. Binds to DNA and alters its conformation. May be involved in regulation of gene expression, nucleoid organization and DNA protection. In Burkholderia thailandensis (strain ATCC 700388 / DSM 13276 / CCUG 48851 / CIP 106301 / E264), this protein is Nucleoid-associated protein BTH_I2220.